Here is a 314-residue protein sequence, read N- to C-terminus: Nodulation protein D 1 (314 aa).

Residues 6 to 63 (LDLNLLVALDALMTERNLTAAARSINLSQPAMSAAVGRLRTYFNDDLFTMVGRELVPT) form the HTH lysR-type domain. The H-T-H motif DNA-binding region spans 23–42 (LTAAARSINLSQPAMSAAVG).

This sequence belongs to the LysR transcriptional regulatory family.

In terms of biological role, nodD regulates the expression of the nodABCFE genes which encode other nodulation proteins. NodD is also a negative regulator of its own expression. Binds flavonoids as inducers. In Rhizobium leguminosarum bv. phaseoli, this protein is Nodulation protein D 1 (nodD1).